Reading from the N-terminus, the 75-residue chain is Rugosin-LK1 (75 aa).

An N-terminal signal peptide occupies residues 1 to 22 (MFTMKKSLLFLFFLGTISLSFC). Positions 23–40 (EEERSADEDDEGEMTEEE) are excised as a propeptide.

In terms of tissue distribution, expressed by the skin glands.

The protein localises to the secreted. Its function is as follows. Has antimicrobial activity against Gram-positive bacteria S.aureus ATCC 2592 (MIC=10.0 uM), S.aureus ATCC 43300 (MIC=15.0 uM) and B.subtilis (MIC=40.0 uM), against Gram-negative bacteria E.coli ML-35P (MIC=10.0 uM), P.aeruginosa PA01 (MIC=5.0 uM) and P.aeruginosa ATCC 27853 (MIC=5.0 uM) and against fungus C.albicans ATCC 2002 (MIC=10.0 uM). In Limnonectes kuhlii (Kuhl's Creek frog), this protein is Rugosin-LK1.